Here is a 170-residue protein sequence, read N- to C-terminus: Large ribosomal subunit protein bL17 (170 aa).

Residues 124-134 (AAEAPKAAKAA) show a composition bias toward low complexity. The interval 124–170 (AAEAPKAAKAAPVKEAKPAAEEAPAKPKRTRKPKADEADAEAAKEEN) is disordered. Basic and acidic residues-rich tracts occupy residues 135–148 (PVKE…EAPA) and 156–170 (PKAD…KEEN).

Belongs to the bacterial ribosomal protein bL17 family. In terms of assembly, part of the 50S ribosomal subunit. Contacts protein L32.

In Desulfovibrio desulfuricans (strain ATCC 27774 / DSM 6949 / MB), this protein is Large ribosomal subunit protein bL17.